The primary structure comprises 365 residues: MSRPVPNPGILDIAPYTPGKSPVAEPGRKVFKLSANETPFGPSPHAIAAYKSAADHLEDYPEGTSRILREAIGKAYGLDPDRIICGAGSDEILNLLAHTYLAPGDEAISSQHGFLVYPIATLANGAKNVVAPEKNLTTDVDAMLAAVTPNTKLVWLANPNNPTGTYIPFDEVKRLRAGLPSHVVLVLDAAYADYVMKNDYELGIELVSTTENTVLTHTFSKVHGLAALRIGWMFGPANIVDAVNRIRGPFNVSVPAQLAAVAAIQDTGHVERSRAHTDKWRNTLAEELPKLGLTVTRSVCNFVLIHFPTTKGKTAAEADAFLTQRGLVLRALNNYGLPHALRMTIGTDEANALVLENLREFMGQP.

Residues 1–21 (MSRPVPNPGILDIAPYTPGKS) are disordered. Lysine 221 carries the post-translational modification N6-(pyridoxal phosphate)lysine.

Belongs to the class-II pyridoxal-phosphate-dependent aminotransferase family. Histidinol-phosphate aminotransferase subfamily. Homodimer. Pyridoxal 5'-phosphate serves as cofactor.

It catalyses the reaction L-histidinol phosphate + 2-oxoglutarate = 3-(imidazol-4-yl)-2-oxopropyl phosphate + L-glutamate. The protein operates within amino-acid biosynthesis; L-histidine biosynthesis; L-histidine from 5-phospho-alpha-D-ribose 1-diphosphate: step 7/9. This is Histidinol-phosphate aminotransferase from Rhodopseudomonas palustris (strain ATCC BAA-98 / CGA009).